Consider the following 167-residue polypeptide: tRNA-specific adenosine deaminase (167 aa).

The region spanning 6-117 (FSHEYWMRHA…DAKTGAAGSL (112 aa)) is the CMP/dCMP-type deaminase domain. Zn(2+) is bound at residue His-57. Glu-59 acts as the Proton donor in catalysis. The Zn(2+) site is built by Cys-87 and Cys-90.

The protein belongs to the cytidine and deoxycytidylate deaminase family. As to quaternary structure, homodimer. Zn(2+) is required as a cofactor.

It catalyses the reaction adenosine(34) in tRNA + H2O + H(+) = inosine(34) in tRNA + NH4(+). Catalyzes the deamination of adenosine to inosine at the wobble position 34 of tRNA(Arg2). This Escherichia coli O157:H7 protein is tRNA-specific adenosine deaminase.